The chain runs to 232 residues: Phosphatidylserine decarboxylase proenzyme (232 aa).

Catalysis depends on Ser-190, which acts as the Schiff-base intermediate with substrate; via pyruvic acid. Ser-190 is subject to Pyruvic acid (Ser); by autocatalysis.

Belongs to the phosphatidylserine decarboxylase family. PSD-A subfamily. Heterodimer of a large membrane-associated beta subunit and a small pyruvoyl-containing alpha subunit. The cofactor is pyruvate. In terms of processing, is synthesized initially as an inactive proenzyme. Formation of the active enzyme involves a self-maturation process in which the active site pyruvoyl group is generated from an internal serine residue via an autocatalytic post-translational modification. Two non-identical subunits are generated from the proenzyme in this reaction, and the pyruvate is formed at the N-terminus of the alpha chain, which is derived from the carboxyl end of the proenzyme. The post-translation cleavage follows an unusual pathway, termed non-hydrolytic serinolysis, in which the side chain hydroxyl group of the serine supplies its oxygen atom to form the C-terminus of the beta chain, while the remainder of the serine residue undergoes an oxidative deamination to produce ammonia and the pyruvoyl prosthetic group on the alpha chain.

The protein localises to the cell membrane. The catalysed reaction is a 1,2-diacyl-sn-glycero-3-phospho-L-serine + H(+) = a 1,2-diacyl-sn-glycero-3-phosphoethanolamine + CO2. Its pathway is phospholipid metabolism; phosphatidylethanolamine biosynthesis; phosphatidylethanolamine from CDP-diacylglycerol: step 2/2. Its function is as follows. Catalyzes the formation of phosphatidylethanolamine (PtdEtn) from phosphatidylserine (PtdSer). The polypeptide is Phosphatidylserine decarboxylase proenzyme (Methylocella silvestris (strain DSM 15510 / CIP 108128 / LMG 27833 / NCIMB 13906 / BL2)).